Here is a 410-residue protein sequence, read N- to C-terminus: Cysteine desulfurase IscS (410 aa).

Residues 80–81 (AT), N160, Q188, and 208–210 (SGH) each bind pyridoxal 5'-phosphate. Position 211 is an N6-(pyridoxal phosphate)lysine (K211). T248 serves as a coordination point for pyridoxal 5'-phosphate. The active-site Cysteine persulfide intermediate is C334. C334 serves as a coordination point for [2Fe-2S] cluster.

The protein belongs to the class-V pyridoxal-phosphate-dependent aminotransferase family. NifS/IscS subfamily. Homodimer. Forms a heterotetramer with IscU, interacts with other sulfur acceptors. Pyridoxal 5'-phosphate is required as a cofactor.

It localises to the cytoplasm. It carries out the reaction (sulfur carrier)-H + L-cysteine = (sulfur carrier)-SH + L-alanine. Its pathway is cofactor biosynthesis; iron-sulfur cluster biosynthesis. Functionally, master enzyme that delivers sulfur to a number of partners involved in Fe-S cluster assembly, tRNA modification or cofactor biosynthesis. Catalyzes the removal of elemental sulfur atoms from cysteine to produce alanine. Functions as a sulfur delivery protein for Fe-S cluster synthesis onto IscU, an Fe-S scaffold assembly protein, as well as other S acceptor proteins. This chain is Cysteine desulfurase IscS, found in Rickettsia akari (strain Hartford).